The sequence spans 266 residues: Urease accessory protein UreD (266 aa).

Belongs to the UreD family. As to quaternary structure, ureD, UreF and UreG form a complex that acts as a GTP-hydrolysis-dependent molecular chaperone, activating the urease apoprotein by helping to assemble the nickel containing metallocenter of UreC. The UreE protein probably delivers the nickel.

The protein localises to the cytoplasm. In terms of biological role, required for maturation of urease via the functional incorporation of the urease nickel metallocenter. The polypeptide is Urease accessory protein UreD (Jannaschia sp. (strain CCS1)).